A 397-amino-acid polypeptide reads, in one-letter code: CCA-adding enzyme (397 aa).

ATP contacts are provided by Gly32 and Arg35. The CTP site is built by Gly32 and Arg35. Mg(2+) is bound by residues Asp45 and Asp47. The ATP site is built by Arg116, Asp159, Arg162, Arg165, and Arg168. Residues Arg116, Asp159, Arg162, Arg165, and Arg168 each coordinate CTP.

It belongs to the tRNA nucleotidyltransferase/poly(A) polymerase family. Bacterial CCA-adding enzyme type 3 subfamily. As to quaternary structure, homodimer. Requires Mg(2+) as cofactor.

It catalyses the reaction a tRNA precursor + 2 CTP + ATP = a tRNA with a 3' CCA end + 3 diphosphate. The enzyme catalyses a tRNA with a 3' CCA end + 2 CTP + ATP = a tRNA with a 3' CCACCA end + 3 diphosphate. Functionally, catalyzes the addition and repair of the essential 3'-terminal CCA sequence in tRNAs without using a nucleic acid template. Adds these three nucleotides in the order of C, C, and A to the tRNA nucleotide-73, using CTP and ATP as substrates and producing inorganic pyrophosphate. tRNA 3'-terminal CCA addition is required both for tRNA processing and repair. Also involved in tRNA surveillance by mediating tandem CCA addition to generate a CCACCA at the 3' terminus of unstable tRNAs. While stable tRNAs receive only 3'-terminal CCA, unstable tRNAs are marked with CCACCA and rapidly degraded. The chain is CCA-adding enzyme from Levilactobacillus brevis (strain ATCC 367 / BCRC 12310 / CIP 105137 / JCM 1170 / LMG 11437 / NCIMB 947 / NCTC 947) (Lactobacillus brevis).